Consider the following 212-residue polypeptide: Imidazole glycerol phosphate synthase subunit HisH (212 aa).

The 210-residue stretch at 3–212 (DIAIVDYGMG…LGNFVRWKPV (210 aa)) folds into the Glutamine amidotransferase type-1 domain. C82 (nucleophile) is an active-site residue. Catalysis depends on residues H191 and E193.

Heterodimer of HisH and HisF.

It is found in the cytoplasm. The catalysed reaction is 5-[(5-phospho-1-deoxy-D-ribulos-1-ylimino)methylamino]-1-(5-phospho-beta-D-ribosyl)imidazole-4-carboxamide + L-glutamine = D-erythro-1-(imidazol-4-yl)glycerol 3-phosphate + 5-amino-1-(5-phospho-beta-D-ribosyl)imidazole-4-carboxamide + L-glutamate + H(+). It carries out the reaction L-glutamine + H2O = L-glutamate + NH4(+). The protein operates within amino-acid biosynthesis; L-histidine biosynthesis; L-histidine from 5-phospho-alpha-D-ribose 1-diphosphate: step 5/9. IGPS catalyzes the conversion of PRFAR and glutamine to IGP, AICAR and glutamate. The HisH subunit catalyzes the hydrolysis of glutamine to glutamate and ammonia as part of the synthesis of IGP and AICAR. The resulting ammonia molecule is channeled to the active site of HisF. The sequence is that of Imidazole glycerol phosphate synthase subunit HisH from Nitrosospira multiformis (strain ATCC 25196 / NCIMB 11849 / C 71).